We begin with the raw amino-acid sequence, 288 residues long: Inositol monophosphatase 2 (288 aa).

4 residues coordinate Mg(2+): E81, D101, I103, and D104. A substrate-binding site is contributed by E81. Substrate contacts are provided by residues 103–106 (IDGT), 205–207 (GSS), Q224, and D231. D231 lines the Mg(2+) pocket.

It belongs to the inositol monophosphatase superfamily. Homodimer. The cofactor is Mg(2+).

It localises to the cytoplasm. It catalyses the reaction a myo-inositol phosphate + H2O = myo-inositol + phosphate. The enzyme catalyses 1D-myo-inositol 1-phosphate + H2O = myo-inositol + phosphate. The catalysed reaction is 1D-myo-inositol 2-phosphate + H2O = myo-inositol + phosphate. It carries out the reaction 1D-myo-inositol 3-phosphate + H2O = myo-inositol + phosphate. It catalyses the reaction 1D-myo-inositol 4-phosphate + H2O = myo-inositol + phosphate. The enzyme catalyses 1D-myo-inositol 5-phosphate + H2O = myo-inositol + phosphate. The catalysed reaction is 1D-myo-inositol 6-phosphate + H2O = myo-inositol + phosphate. It carries out the reaction alpha-D-glucose 1-phosphate + H2O = D-glucose + phosphate. It catalyses the reaction glycerol 2-phosphate + H2O = glycerol + phosphate. The enzyme catalyses adenosine 2'-phosphate + H2O = adenosine + phosphate. The protein operates within polyol metabolism; myo-inositol biosynthesis; myo-inositol from D-glucose 6-phosphate: step 2/2. With respect to regulation, inhibited by high Li(+) and restricted Mg(2+) concentrations. Phosphatase that can use myo-inositol monophosphates, myo-inositol 1,4-diphosphate, scyllo-inositol-1,4-diphosphate, glucose-1-phosphate, beta-glycerophosphate and 2'-AMP as substrates in vitro. It is likely that IMPA2 has an as yet unidentified in vivo substrate(s). Has been implicated as the pharmacological target for lithium (Li(+)) action in brain. The sequence is that of Inositol monophosphatase 2 from Homo sapiens (Human).